The sequence spans 186 residues: LIM domain-containing protein DDB_G0271356 (186 aa).

LIM zinc-binding domains are found at residues 7–67 (PECY…DKFA), 68–127 (PKCQ…KIGF), and 128–186 (LCRH…KLYG).

In Dictyostelium discoideum (Social amoeba), this protein is LIM domain-containing protein DDB_G0271356.